Here is a 595-residue protein sequence, read N- to C-terminus: Probable hydrolase M10 (595 aa).

The first 23 residues, 1-23 (MRFTSTILLRVAVLLSLGGGSQT), serve as a signal peptide directing secretion. Residues Asn-59, Asn-87, Asn-266, Asn-436, Asn-457, and Asn-561 are each glycosylated (N-linked (GlcNAc...) asparagine).

This sequence belongs to the beta-lactamase family.

It participates in secondary metabolite biosynthesis. Its function is as follows. Probable hydrolase; part of the gene cluster that mediates the biosynthesis of squalestatin S1 (SQS1, also known as zaragozic acid A), a heavily oxidized fungal polyketide that offers potent cholesterol lowering activity by targeting squalene synthase (SS). SQS1 is composed of a 2,8-dioxobicyclic[3.2.1]octane-3,4,5-tricarboxyclic acid core that is connected to two lipophilic polyketide arms. These initial steps feature the priming of an unusual benzoic acid starter unit onto the highly reducing polyketide synthase pks2, followed by oxaloacetate extension and product release to generate a tricarboxylic acid containing product. The phenylalanine ammonia lyase (PAL) M7 and the acyl-CoA ligase M9 are involved in transforming phenylalanine into benzoyl-CoA. The citrate synthase-like protein R3 is involved in connecting the C-alpha-carbons of the hexaketide chain and oxaloacetate to afford the tricarboxylic acid unit. The potential hydrolytic enzymes, M8 and M10, are in close proximity to pks2 and may participate in product release. On the other side, the tetraketide arm is synthesized by a the squalestatin tetraketide synthase pks1 and enzymatically esterified to the core in the last biosynthetic step, by the acetyltransferase M4. The biosynthesis of the tetraketide must involve 3 rounds of chain extension. After the first and second rounds methyl-transfer occurs, and in all rounds of extension the ketoreductase and dehydratase are active. The enoyl reductase and C-MeT of pks1 are not active in the final round of extension. The acetyltransferase M4 appears to have a broad substrate selectivity for its acyl CoA substrate, allowing the in vitro synthesis of novel squalestatins. The biosynthesis of SQS1 requires several oxidative steps likely performed by oxidoreductases M1, R1 and R2. Finally, in support of the identification of the cluster as being responsible for SQS1 production, the cluster contains a gene encoding a putative squalene synthase (SS) R6, suggesting a likely mechanism for self-resistance. In Phoma sp. (strain ATCC 20986 / MF5453), this protein is Probable hydrolase M10.